The sequence spans 515 residues: 2,3-bisphosphoglycerate-independent phosphoglycerate mutase (515 aa).

The Mn(2+) site is built by D14 and S63. S63 is an active-site residue. Residues H124, 154-155, R186, R192, 259-262, and K334 each bind substrate; these read RD and RADR. D401, H405, D442, H443, and H460 together coordinate Mn(2+).

This sequence belongs to the BPG-independent phosphoglycerate mutase family. The cofactor is Mg(2+). Requires Mn(2+) as cofactor.

It carries out the reaction (2R)-2-phosphoglycerate = (2R)-3-phosphoglycerate. It functions in the pathway carbohydrate degradation; glycolysis; pyruvate from D-glyceraldehyde 3-phosphate: step 3/5. Its activity is regulated as follows. Activity is not affected by 2,3-bisphosphoglycerate. Its function is as follows. Catalyzes the interconversion of 2-phosphoglycerate and 3-phosphoglycerate. In Brugia malayi (Filarial nematode worm), this protein is 2,3-bisphosphoglycerate-independent phosphoglycerate mutase.